The following is a 345-amino-acid chain: Nuclear distribution protein nudE-like 1 (345 aa).

The stretch at 28-190 forms a coiled coil; it reads QSFQEARDEL…LAVRERQQEV (163 aa). Positions 56 to 166 are self-association; sequence VQAEQRNRDL…LDEKESLLVS (111 aa). Positions 64–189 are interaction with KATNB1; that stretch reads DLQADNQRLK…ELAVRERQQE (126 aa). Residues 114-133 form a required for interaction with PAFAH1B1 region; that stretch reads YVRELEQANDDLERAKRATI. The segment at 175–345 is interaction with CENPF; that stretch reads RDLRQELAVR…SAPGMLPLSV (171 aa). Residues 189-256 are interaction with YWHAE; the sequence is EVTRKSAPSS…SARISALNIV (68 aa). The interval 191 to 345 is interaction with NEFL; it reads TRKSAPSSPT…SAPGMLPLSV (155 aa). The tract at residues 195–256 is interaction with KATNA1; sequence APSSPTLDCE…SARISALNIV (62 aa). At S215 the chain carries Phosphoserine. T219 carries the post-translational modification Phosphothreonine; by CDK1 and MAPK1. Position 231 is a phosphoserine (S231). Residues 241 to 280 form an interaction with DISC1 region; it reads TSPLTPSARISALNIVGDLLRKVGALESKLAACRNFAKDQ. A Phosphoserine; by CDK1 modification is found at S242. T245 bears the Phosphothreonine; by CDK1 and MAPK1 mark. A required for localization to the centrosome and interaction with dynein, dynactin, tubulin gamma, PCM1 and PCNT region spans residues 256-291; the sequence is VGDLLRKVGALESKLAACRNFAKDQASRKSYISGNV. Residue C273 is the site of S-palmitoyl cysteine; by ZDHHC2, ZDHHC3 and ZDHHC7 attachment. Positions 315-345 are disordered; the sequence is GAVNGFDPAPPPPGLGSSRPSSAPGMLPLSV. Over residues 329-339 the composition is skewed to low complexity; that stretch reads LGSSRPSSAPG. S344 carries the post-translational modification Phosphoserine.

Belongs to the nudE family. As to quaternary structure, interacts with PLEKHM1 (via N- and C-terminus). Interacts with YWHAE. Interacts directly with NEFL and indirectly with NEFH. Interacts with microtubules. Self-associates. Interacts with DISC1, dynein, dynactin, tubulin gamma, KATNA1, KATNB1, PAFAH1B1, PCM1 and PCNT. Interacts (via C-terminus) with CENPF. Interacts with ZNF365. Interacts with GTP-bound RAB9A; the interaction may lead to RAB9A-dynein motor tethering. In terms of processing, phosphorylated in mitosis. Can be phosphorylated by CDK1, CDK5 and MAPK1. Phosphorylation by CDK5 promotes interaction with KATNA1 and YWHAE. Post-translationally, palmitoylation at Cys-273 reduces affinity for dynein. Expressed in brain, heart, kidney, liver, lung, pancreas, placenta and skeletal muscle.

The protein resides in the cytoplasm. Its subcellular location is the cytoskeleton. It is found in the microtubule organizing center. The protein localises to the centrosome. It localises to the chromosome. The protein resides in the centromere. Its subcellular location is the kinetochore. It is found in the spindle. Required for organization of the cellular microtubule array and microtubule anchoring at the centrosome. May regulate microtubule organization at least in part by targeting the microtubule severing protein KATNA1 to the centrosome. Also positively regulates the activity of the minus-end directed microtubule motor protein dynein. May enhance dynein-mediated microtubule sliding by targeting dynein to the microtubule plus ends. Required for several dynein- and microtubule-dependent processes such as the maintenance of Golgi integrity, the centripetal motion of secretory vesicles and the coupling of the nucleus and centrosome. Also required during brain development for the migration of newly formed neurons from the ventricular/subventricular zone toward the cortical plate. Plays a role, together with DISC1, in the regulation of neurite outgrowth. Required for mitosis in some cell types but appears to be dispensible for mitosis in cortical neuronal progenitors, which instead requires NDE1. Facilitates the polymerization of neurofilaments from the individual subunits NEFH and NEFL. Positively regulates lysosome peripheral distribution and ruffled border formation in osteoclasts. Plays a role, together with DISC1, in the regulation of neurite outgrowth. May act as a RAB9A/B effector that tethers RAB9-associated late endosomes to the dynein motor for their retrograde transport to the trans-Golgi network. The polypeptide is Nuclear distribution protein nudE-like 1 (NDEL1) (Homo sapiens (Human)).